The following is a 330-amino-acid chain: Delta-aminolevulinic acid dehydratase (330 aa).

The active-site Schiff-base intermediate with substrate is Lys203. The 5-aminolevulinate site is built by Arg213 and Arg224. Glu240 lines the Mg(2+) pocket. The active-site Schiff-base intermediate with substrate is Lys255. The 5-aminolevulinate site is built by Ser281 and Tyr320.

Belongs to the ALAD family. Homooctamer.

The enzyme catalyses 2 5-aminolevulinate = porphobilinogen + 2 H2O + H(+). Its pathway is porphyrin-containing compound metabolism; protoporphyrin-IX biosynthesis; coproporphyrinogen-III from 5-aminolevulinate: step 1/4. Functionally, catalyzes an early step in the biosynthesis of tetrapyrroles. Binds two molecules of 5-aminolevulinate per subunit, each at a distinct site, and catalyzes their condensation to form porphobilinogen. The chain is Delta-aminolevulinic acid dehydratase (hemB) from Streptomyces coelicolor (strain ATCC BAA-471 / A3(2) / M145).